Here is a 294-residue protein sequence, read N- to C-terminus: 33 kDa chaperonin (294 aa).

Cystine bridges form between Cys236/Cys238 and Cys269/Cys272.

Belongs to the HSP33 family. Under oxidizing conditions two disulfide bonds are formed involving the reactive cysteines. Under reducing conditions zinc is bound to the reactive cysteines and the protein is inactive.

Its subcellular location is the cytoplasm. In terms of biological role, redox regulated molecular chaperone. Protects both thermally unfolding and oxidatively damaged proteins from irreversible aggregation. Plays an important role in the bacterial defense system toward oxidative stress. The protein is 33 kDa chaperonin of Desulfotalea psychrophila (strain LSv54 / DSM 12343).